A 158-amino-acid polypeptide reads, in one-letter code: Ribosome maturation factor RimP (158 aa).

Belongs to the RimP family.

It is found in the cytoplasm. Functionally, required for maturation of 30S ribosomal subunits. In Leuconostoc mesenteroides subsp. mesenteroides (strain ATCC 8293 / DSM 20343 / BCRC 11652 / CCM 1803 / JCM 6124 / NCDO 523 / NBRC 100496 / NCIMB 8023 / NCTC 12954 / NRRL B-1118 / 37Y), this protein is Ribosome maturation factor RimP.